Reading from the N-terminus, the 635-residue chain is Biosynthetic arginine decarboxylase (635 aa).

At Lys-100 the chain carries N6-(pyridoxal phosphate)lysine. 282-292 (LDIGGGLGVDY) is a binding site for substrate.

The protein belongs to the Orn/Lys/Arg decarboxylase class-II family. SpeA subfamily. The cofactor is Mg(2+). Pyridoxal 5'-phosphate serves as cofactor.

The enzyme catalyses L-arginine + H(+) = agmatine + CO2. It participates in amine and polyamine biosynthesis; agmatine biosynthesis; agmatine from L-arginine: step 1/1. Functionally, catalyzes the biosynthesis of agmatine from arginine. The sequence is that of Biosynthetic arginine decarboxylase from Geobacter sp. (strain M21).